The primary structure comprises 141 residues: Ribosome-binding factor A (141 aa).

The tract at residues 120-141 is disordered; sequence SPHVQRDLQENDDQEDDSEGSL. Positions 129 to 141 are enriched in acidic residues; it reads ENDDQEDDSEGSL.

Belongs to the RbfA family. Monomer. Binds 30S ribosomal subunits, but not 50S ribosomal subunits or 70S ribosomes.

The protein localises to the cytoplasm. In terms of biological role, one of several proteins that assist in the late maturation steps of the functional core of the 30S ribosomal subunit. Associates with free 30S ribosomal subunits (but not with 30S subunits that are part of 70S ribosomes or polysomes). Required for efficient processing of 16S rRNA. May interact with the 5'-terminal helix region of 16S rRNA. The chain is Ribosome-binding factor A from Zymomonas mobilis subsp. mobilis (strain ATCC 31821 / ZM4 / CP4).